The primary structure comprises 446 residues: Asparagine--tRNA ligase (446 aa).

It belongs to the class-II aminoacyl-tRNA synthetase family. As to quaternary structure, homodimer.

It localises to the cytoplasm. The enzyme catalyses tRNA(Asn) + L-asparagine + ATP = L-asparaginyl-tRNA(Asn) + AMP + diphosphate + H(+). This Sorangium cellulosum (strain So ce56) (Polyangium cellulosum (strain So ce56)) protein is Asparagine--tRNA ligase.